The following is a 285-amino-acid chain: Nucleotide-binding protein GSU1884 (285 aa).

Residue 8–15 (GLSGSGKS) coordinates ATP. A GTP-binding site is contributed by 59–62 (DIRG).

It belongs to the RapZ-like family.

Functionally, displays ATPase and GTPase activities. The sequence is that of Nucleotide-binding protein GSU1884 from Geobacter sulfurreducens (strain ATCC 51573 / DSM 12127 / PCA).